The following is a 464-amino-acid chain: Protein FAM90A7 (464 aa).

Disordered regions lie at residues 1–42 (MMAR…DPRL), 69–387 (VPAT…AGHD), and 410–437 (AAPS…SEAP). Basic and acidic residues-rich tracts occupy residues 74–89 (GKKE…KPRA) and 97–111 (NKDK…RQQD). A compositionally biased stretch (low complexity) spans 180–197 (LASLSPLRKASLSSSSSL).

Belongs to the FAM90 family.

The polypeptide is Protein FAM90A7 (Homo sapiens (Human)).